The primary structure comprises 485 residues: Aspartyl/glutamyl-tRNA(Asn/Gln) amidotransferase subunit B (485 aa).

Belongs to the GatB/GatE family. GatB subfamily. As to quaternary structure, heterotrimer of A, B and C subunits.

It catalyses the reaction L-glutamyl-tRNA(Gln) + L-glutamine + ATP + H2O = L-glutaminyl-tRNA(Gln) + L-glutamate + ADP + phosphate + H(+). It carries out the reaction L-aspartyl-tRNA(Asn) + L-glutamine + ATP + H2O = L-asparaginyl-tRNA(Asn) + L-glutamate + ADP + phosphate + 2 H(+). In terms of biological role, allows the formation of correctly charged Asn-tRNA(Asn) or Gln-tRNA(Gln) through the transamidation of misacylated Asp-tRNA(Asn) or Glu-tRNA(Gln) in organisms which lack either or both of asparaginyl-tRNA or glutaminyl-tRNA synthetases. The reaction takes place in the presence of glutamine and ATP through an activated phospho-Asp-tRNA(Asn) or phospho-Glu-tRNA(Gln). The polypeptide is Aspartyl/glutamyl-tRNA(Asn/Gln) amidotransferase subunit B (Opitutus terrae (strain DSM 11246 / JCM 15787 / PB90-1)).